A 338-amino-acid chain; its full sequence is Ferrochelatase (338 aa).

Fe cation contacts are provided by histidine 207 and glutamate 293.

The protein belongs to the ferrochelatase family.

It is found in the cytoplasm. It carries out the reaction heme b + 2 H(+) = protoporphyrin IX + Fe(2+). It functions in the pathway porphyrin-containing compound metabolism; protoheme biosynthesis; protoheme from protoporphyrin-IX: step 1/1. In terms of biological role, catalyzes the ferrous insertion into protoporphyrin IX. The chain is Ferrochelatase from Shewanella denitrificans (strain OS217 / ATCC BAA-1090 / DSM 15013).